The sequence spans 346 residues: Putative D-threonate 4-phosphate dehydrogenase (346 aa).

Histidine 141 and threonine 142 together coordinate substrate. A divalent metal cation-binding residues include histidine 171, histidine 215, and histidine 270. Positions 278 and 296 each coordinate substrate.

Belongs to the PdxA family. PdxA2 subfamily. Homodimer. It depends on a divalent metal cation as a cofactor.

The catalysed reaction is 4-O-phospho-D-threonate + NAD(+) = dihydroxyacetone phosphate + CO2 + NADH. Catalyzes the NAD-dependent oxidation and subsequent decarboxylation of D-threonate 4-phosphate to produce dihydroxyacetone phosphate (DHAP). The polypeptide is Putative D-threonate 4-phosphate dehydrogenase (Cutibacterium acnes (strain DSM 16379 / KPA171202) (Propionibacterium acnes)).